We begin with the raw amino-acid sequence, 445 residues long: Crotonyl-CoA reductase (445 aa).

Zn(2+) is bound at residue Glu149.

Belongs to the zinc-containing alcohol dehydrogenase family. Crotonyl-CoA carboxylase/reductase subfamily. In terms of assembly, homodimer. Zn(2+) serves as cofactor.

The catalysed reaction is butanoyl-CoA + NADP(+) = (2E)-butenoyl-CoA + NADPH + H(+). Inhibited by NADPH at concentrations above 200 uM, by MgCl (30%), by ZnCl(2) (55%), and by CoCl, MnCl and CaCl (100%). Also inhibited by iodoacetamide, N-ethylmaleamide, the thiol group inhibitor beta-chloromercuribenzoate, palmitoyl-CoA and myristoyl-CoA. Functionally, catalyzes the conversion of crotonyl-CoA to butyryl-CoA. It uses only NADP as electron donor. May have a role in providing butyryl-CoA as a starter unit for straight-chain fatty acid biosynthesis. In Streptomyces avermitilis (strain ATCC 31267 / DSM 46492 / JCM 5070 / NBRC 14893 / NCIMB 12804 / NRRL 8165 / MA-4680), this protein is Crotonyl-CoA reductase (ccrA2).